The following is a 319-amino-acid chain: Acetyl-coenzyme A carboxylase carboxyl transferase subunit alpha (319 aa).

The 254-residue stretch at 43 to 296 folds into the CoA carboxyltransferase C-terminal domain; that stretch reads LRDKSIELTR…KKQLLFDLSE (254 aa).

The protein belongs to the AccA family. As to quaternary structure, acetyl-CoA carboxylase is a heterohexamer composed of biotin carboxyl carrier protein (AccB), biotin carboxylase (AccC) and two subunits each of ACCase subunit alpha (AccA) and ACCase subunit beta (AccD).

The protein localises to the cytoplasm. The enzyme catalyses N(6)-carboxybiotinyl-L-lysyl-[protein] + acetyl-CoA = N(6)-biotinyl-L-lysyl-[protein] + malonyl-CoA. It functions in the pathway lipid metabolism; malonyl-CoA biosynthesis; malonyl-CoA from acetyl-CoA: step 1/1. Component of the acetyl coenzyme A carboxylase (ACC) complex. First, biotin carboxylase catalyzes the carboxylation of biotin on its carrier protein (BCCP) and then the CO(2) group is transferred by the carboxyltransferase to acetyl-CoA to form malonyl-CoA. This chain is Acetyl-coenzyme A carboxylase carboxyl transferase subunit alpha, found in Baumannia cicadellinicola subsp. Homalodisca coagulata.